The sequence spans 351 residues: sn-1 oleoyl-lipid 12-desaturase (351 aa).

Transmembrane regions (helical) follow at residues W46–L66 and W68–V88. A Histidine box-1 motif is present at residues H90–H94. Residues W102–W122 form a helical membrane-spanning segment. A Histidine box-2 motif is present at residues H126–H130. The next 2 membrane-spanning stretches (helical) occupy residues I199–V219 and F222–I242. The Histidine box-3 motif lies at H290–V294.

This sequence belongs to the fatty acid desaturase type 2 family. Requires Fe(2+) as cofactor.

The protein localises to the membrane. It carries out the reaction a 1-[(9Z)-octadecenoyl]-2-acyl-glycerolipid + 2 reduced [2Fe-2S]-[ferredoxin] + O2 + 2 H(+) = a 1-[(9Z,12Z)-octadecdienoyl]-2-acyl-glycerolipid + 2 oxidized [2Fe-2S]-[ferredoxin] + 2 H2O. It participates in lipid metabolism; polyunsaturated fatty acid biosynthesis. Functionally, desaturase involved in fatty acid biosynthesis. Introduces a double bond at carbon 12 of oleoyl groups (18:1) attached to the sn-1 position of the glycerol moiety of membrane glycerolipids. This enzyme is involved in chilling tolerance because the phase transition temperature of lipids of cellular membranes depends on the degree of unsaturation of fatty acids of the membrane lipids. The polypeptide is sn-1 oleoyl-lipid 12-desaturase (Synechocystis sp. (strain ATCC 27184 / PCC 6803 / Kazusa)).